The primary structure comprises 391 residues: GTPase Obg (391 aa).

The 159-residue stretch at 1-159 (MKFIDEALIR…RDLLLELMLL (159 aa)) folds into the Obg domain. Residues 160–333 (ADVGMLGLPN…LTRDIMDFIE (174 aa)) form the OBG-type G domain. GTP-binding positions include 166–173 (GLPNAGKS), 191–195 (FTTLV), 213–216 (DIPG), 283–286 (NKID), and 314–316 (SAA). 2 residues coordinate Mg(2+): serine 173 and threonine 193.

The protein belongs to the TRAFAC class OBG-HflX-like GTPase superfamily. OBG GTPase family. As to quaternary structure, monomer. The cofactor is Mg(2+).

Its subcellular location is the cytoplasm. In terms of biological role, an essential GTPase which binds GTP, GDP and possibly (p)ppGpp with moderate affinity, with high nucleotide exchange rates and a fairly low GTP hydrolysis rate. Plays a role in control of the cell cycle, stress response, ribosome biogenesis and in those bacteria that undergo differentiation, in morphogenesis control. The polypeptide is GTPase Obg (Actinobacillus pleuropneumoniae serotype 7 (strain AP76)).